A 206-amino-acid chain; its full sequence is Small ribosomal subunit protein uS4 (206 aa).

Positions 96 to 156 (GRLDNVVYRM…EKAKKQSRVK (61 aa)) constitute an S4 RNA-binding domain.

It belongs to the universal ribosomal protein uS4 family. Part of the 30S ribosomal subunit. Contacts protein S5. The interaction surface between S4 and S5 is involved in control of translational fidelity.

Its function is as follows. One of the primary rRNA binding proteins, it binds directly to 16S rRNA where it nucleates assembly of the body of the 30S subunit. Functionally, with S5 and S12 plays an important role in translational accuracy. The sequence is that of Small ribosomal subunit protein uS4 from Shigella flexneri.